Consider the following 381-residue polypeptide: Heterogeneous nuclear rnp K-like protein 2 (381 aa).

A disordered region spans residues 1–34; it reads MSQFFEAATPVAIPTNNTNGGSSDAGSAATGGAP. Positions 15–33 are enriched in low complexity; sequence TNNTNGGSSDAGSAATGGA. KH domains are found at residues 43 to 107, 156 to 221, and 258 to 326; these read TINH…IGDI, IGYV…LIEI, and NTRI…ESML. The interval 357–381 is disordered; the sequence is RSDSASFLEEKEEPQKNHDNKEEQS. 3 positions are modified to phosphoserine: serine 358, serine 360, and serine 362. Residues 369–381 show a composition bias toward basic and acidic residues; that stretch reads EPQKNHDNKEEQS.

This sequence belongs to the HEK2 family. Binds RNA. Phosphorylated by the plasma membrane-Anchored casein kinase YCK1. Phosphorylation at its C-terminus reduces its RNA-binding capacity.

It is found in the cytoplasm. The protein localises to the P-body. It localises to the nucleus. Its subcellular location is the chromosome. The protein resides in the telomere. Functionally, RNA-binding protein involved in the correct localization of transcripts in the cell. RNA localization is a widespread mechanism for achieving localized protein synthesis. Required for the asymmetric localization to the daughter cell nucleus of the ASH1 transcript, coding for a specific repressor of transcription. Overexpression inhibits translation of the ASH1 transcript. Involved in the stability of transcripts, like the MTL1 mRNA. Involved in structural and functional organization of telomeric chromatin and regulates silencing at the HMR locus. The sequence is that of Heterogeneous nuclear rnp K-like protein 2 (HEK2) from Saccharomyces cerevisiae (strain RM11-1a) (Baker's yeast).